Here is a 257-residue protein sequence, read N- to C-terminus: Acetylglutamate kinase (257 aa).

Substrate contacts are provided by residues 43–44 (GG), R65, and N157. Residues 180 to 185 (DVSGIL) and 208 to 210 (IIT) contribute to the ATP site.

It belongs to the acetylglutamate kinase family. ArgB subfamily. Homodimer.

Its subcellular location is the cytoplasm. It carries out the reaction N-acetyl-L-glutamate + ATP = N-acetyl-L-glutamyl 5-phosphate + ADP. Its pathway is amino-acid biosynthesis; L-arginine biosynthesis; N(2)-acetyl-L-ornithine from L-glutamate: step 2/4. Catalyzes the ATP-dependent phosphorylation of N-acetyl-L-glutamate. The polypeptide is Acetylglutamate kinase (Salmonella paratyphi A (strain AKU_12601)).